The primary structure comprises 396 residues: Phosphoglycerate kinase (396 aa).

Substrate contacts are provided by residues 21–23 (DFN), Arg36, 59–62 (HLGK), Arg119, and Arg156. ATP-binding positions include Lys206, Glu325, and 352-355 (GGDS).

It belongs to the phosphoglycerate kinase family. Monomer.

Its subcellular location is the cytoplasm. The enzyme catalyses (2R)-3-phosphoglycerate + ATP = (2R)-3-phospho-glyceroyl phosphate + ADP. Its pathway is carbohydrate degradation; glycolysis; pyruvate from D-glyceraldehyde 3-phosphate: step 2/5. This chain is Phosphoglycerate kinase, found in Staphylococcus epidermidis (strain ATCC 35984 / DSM 28319 / BCRC 17069 / CCUG 31568 / BM 3577 / RP62A).